Here is a 154-residue protein sequence, read N- to C-terminus: SsrA-binding protein (154 aa).

It belongs to the SmpB family.

The protein localises to the cytoplasm. In terms of biological role, required for rescue of stalled ribosomes mediated by trans-translation. Binds to transfer-messenger RNA (tmRNA), required for stable association of tmRNA with ribosomes. tmRNA and SmpB together mimic tRNA shape, replacing the anticodon stem-loop with SmpB. tmRNA is encoded by the ssrA gene; the 2 termini fold to resemble tRNA(Ala) and it encodes a 'tag peptide', a short internal open reading frame. During trans-translation Ala-aminoacylated tmRNA acts like a tRNA, entering the A-site of stalled ribosomes, displacing the stalled mRNA. The ribosome then switches to translate the ORF on the tmRNA; the nascent peptide is terminated with the 'tag peptide' encoded by the tmRNA and targeted for degradation. The ribosome is freed to recommence translation, which seems to be the essential function of trans-translation. The polypeptide is SsrA-binding protein (Methylobacillus flagellatus (strain ATCC 51484 / DSM 6875 / VKM B-1610 / KT)).